A 262-amino-acid polypeptide reads, in one-letter code: Glutamate racemase (262 aa).

Substrate is bound by residues 5-6 and 37-38; these read DS and YG. Cys-69 functions as the Proton donor/acceptor in the catalytic mechanism. A substrate-binding site is contributed by 70–71; sequence NT. Cys-181 serves as the catalytic Proton donor/acceptor. A substrate-binding site is contributed by 182 to 183; the sequence is TH.

Belongs to the aspartate/glutamate racemases family.

It catalyses the reaction L-glutamate = D-glutamate. It participates in cell wall biogenesis; peptidoglycan biosynthesis. Provides the (R)-glutamate required for cell wall biosynthesis. This chain is Glutamate racemase, found in Buchnera aphidicola subsp. Acyrthosiphon pisum (strain 5A).